The sequence spans 159 residues: Dihydrofolate reductase (159 aa).

In terms of domain architecture, DHFR spans 1-158 (MISLIAALAV…HSYCFEILER (158 aa)). Isoleucine 5 is a binding site for substrate. NADP(+)-binding positions include alanine 7 and 13–19 (VIGMENA). Aspartate 27 lines the substrate pocket. Position 45 to 46 (45 to 46 (LT)) interacts with NADP(+). Residues arginine 52 and arginine 57 each coordinate substrate. Residues 63–64 (SS), lysine 76, and 95–102 (GGGRVYEQ) each bind NADP(+). Position 113 (threonine 113) interacts with substrate.

This sequence belongs to the dihydrofolate reductase family.

It catalyses the reaction (6S)-5,6,7,8-tetrahydrofolate + NADP(+) = 7,8-dihydrofolate + NADPH + H(+). It functions in the pathway cofactor biosynthesis; tetrahydrofolate biosynthesis; 5,6,7,8-tetrahydrofolate from 7,8-dihydrofolate: step 1/1. Key enzyme in folate metabolism. Catalyzes an essential reaction for de novo glycine and purine synthesis, and for DNA precursor synthesis. The sequence is that of Dihydrofolate reductase (folA) from Klebsiella aerogenes (Enterobacter aerogenes).